A 173-amino-acid polypeptide reads, in one-letter code: Translation initiation factor IF-3 (173 aa).

The protein belongs to the IF-3 family. Monomer.

The protein resides in the cytoplasm. Its function is as follows. IF-3 binds to the 30S ribosomal subunit and shifts the equilibrium between 70S ribosomes and their 50S and 30S subunits in favor of the free subunits, thus enhancing the availability of 30S subunits on which protein synthesis initiation begins. In Clostridium tetani (strain Massachusetts / E88), this protein is Translation initiation factor IF-3.